Here is a 181-residue protein sequence, read N- to C-terminus: Histone deacetylase complex subunit SAP30L-B (181 aa).

2 disulfide bridges follow: Cys-26–Cys-27 and Cys-35–Cys-71. The Atypical zinc finger occupies 26-74; it reads CCLIDGGERCPRPAGNASFSKRVQKSISQKKLKLDIDKSVRHLYICDFH. The interval 82–103 is disordered; the sequence is RNKRKRKTSDDGGDSPEHETDV. The Nuclear localization signal (NLS) signature appears at 83–88; that stretch reads NKRKRK. The tract at residues 85 to 87 is important for DNA and phosphoinositide binding; the sequence is RKR.

This sequence belongs to the SAP30 family. As to quaternary structure, interacts with components of the histone deacetylase complex sin3a, hdac1 and hdac2. Binds histones and nucleosomes.

Its subcellular location is the nucleus. The protein localises to the nucleolus. Its function is as follows. Functions as a transcription repressor, probably via its interaction with histone deacetylase complexes. Involved in the functional recruitment of the class 1 Sin3-histone deacetylase complex (HDAC) to the nucleolus. Binds DNA, apparently without sequence-specificity, and bends bound double-stranded DNA. Binds phosphoinositol phosphates (phosphoinositol 3-phosphate, phosphoinositol 4-phosphate and phosphoinositol 5-phosphate) via the same basic sequence motif that mediates DNA binding and nuclear import. In Xenopus laevis (African clawed frog), this protein is Histone deacetylase complex subunit SAP30L-B (sap30l-b).